A 630-amino-acid chain; its full sequence is uncharacterized protein (630 aa).

The next 4 helical transmembrane spans lie at 254 to 274 (MFYA…ELRV), 504 to 524 (IALL…LTSI), 564 to 584 (MIFA…SMVF), and 601 to 621 (IIVI…AVLF).

Its subcellular location is the cell membrane. This is an uncharacterized protein from Mycoplasma genitalium (strain ATCC 33530 / DSM 19775 / NCTC 10195 / G37) (Mycoplasmoides genitalium).